The primary structure comprises 51 residues: Large ribosomal subunit protein eL39 (51 aa).

Belongs to the eukaryotic ribosomal protein eL39 family.

This is Large ribosomal subunit protein eL39 from Saccharolobus islandicus (strain Y.N.15.51 / Yellowstone #2) (Sulfolobus islandicus).